The sequence spans 318 residues: L-lactate dehydrogenase (318 aa).

NAD(+)-binding positions include V18, D39, K44, Y69, and 83–84; that span reads GA. Q86 and R92 together coordinate substrate. Residues S105, 122–124, and S147 each bind NAD(+); that span reads VSN. 124–127 is a substrate binding site; that stretch reads NPVD. 152 to 155 lines the substrate pocket; that stretch reads DTSR. H179 acts as the Proton acceptor in catalysis. Y225 bears the Phosphotyrosine mark. Residue T234 participates in substrate binding.

The protein belongs to the LDH/MDH superfamily. LDH family. In terms of assembly, homotetramer.

The protein resides in the cytoplasm. The enzyme catalyses (S)-lactate + NAD(+) = pyruvate + NADH + H(+). It functions in the pathway fermentation; pyruvate fermentation to lactate; (S)-lactate from pyruvate: step 1/1. Its function is as follows. Catalyzes the conversion of lactate to pyruvate. The chain is L-lactate dehydrogenase from Clostridium botulinum (strain ATCC 19397 / Type A).